Here is a 421-residue protein sequence, read N- to C-terminus: MPIPWVEKYRPKSFSEIVNQEEAKQILASWICTRFKAPQEFCARWAKRRDKEIKEARAVLLWGPPGIGKTTLVHALAKEIGYELVELNASDVRTGERIRQVVGRGLREASLFGYAGKIVLFDEVDGLHVKEDLGGLEAILNLIETAKVPIVLTANNPFDPKLRPLRDISLVVGLKRLSEDEVVEVLKRICASEGAKCEEEALRSLAKSSYGDLRAAINDLQLYLAGRKVLTVDDIKRAGERNPQLSMFEILDRVYKARWFDEARAVSFNPSFDWEQYFVWALETIPIVYKDLEVMSEAFDRLSKADMFIGIVKRTQEWELLSYAMELALGGVSQVKNKPRLPPFIRYGFPQRLLLLAKSKEARRRREMVVEYLARNLHVSKGLVNAEIFYVLSALAKKDDHVVERLARALGISPIDIKNLL.

Position 63 to 70 (63 to 70 (GPPGIGKT)) interacts with ATP.

It belongs to the activator 1 small subunits family. RfcL subfamily. In terms of assembly, heteromultimer composed of small subunits (RfcS) and large subunits (RfcL).

Part of the RFC clamp loader complex which loads the PCNA sliding clamp onto DNA. The protein is Replication factor C large subunit of Pyrobaculum calidifontis (strain DSM 21063 / JCM 11548 / VA1).